A 257-amino-acid polypeptide reads, in one-letter code: Transmembrane protein C257L (257 aa).

The next 2 helical transmembrane spans lie at 123 to 143 (LELL…FTAL) and 163 to 183 (IMIF…YVLV).

This sequence belongs to the asfivirus C257R family.

It localises to the host membrane. It is found in the virion. This African swine fever virus (isolate Pig/Kenya/KEN-50/1950) (ASFV) protein is Transmembrane protein C257L.